The sequence spans 118 residues: Small ribosomal subunit protein uS13 (118 aa).

The tract at residues 94–118 is disordered; the sequence is SLPLRGQRTKTNARTRKGPRKPIKK.

This sequence belongs to the universal ribosomal protein uS13 family. As to quaternary structure, part of the 30S ribosomal subunit. Forms a loose heterodimer with protein S19. Forms two bridges to the 50S subunit in the 70S ribosome.

Functionally, located at the top of the head of the 30S subunit, it contacts several helices of the 16S rRNA. In the 70S ribosome it contacts the 23S rRNA (bridge B1a) and protein L5 of the 50S subunit (bridge B1b), connecting the 2 subunits; these bridges are implicated in subunit movement. Contacts the tRNAs in the A and P-sites. The chain is Small ribosomal subunit protein uS13 from Vibrio vulnificus (strain CMCP6).